Here is a 201-residue protein sequence, read N- to C-terminus: MSSAIVAKLNKEDIIKDTVKDLAFEILGELSVSYVDSDDIKLGNPMPMEATQAAPTIKFTPFDKSQLSAEDKLALLMTDPDAPSRTEHKWSEVCHYIITDIPVEYGPGGDIAISGKGVVRNNYIGPGPPKNSGYHRYVFFLCKQPKGADSSTFTKVENIISWGYGTPGAGAYDYIKENNLQLVGANYYMVENTTVDFNYDM.

Belongs to the phosphatidylethanolamine-binding protein family.

This is an uncharacterized protein from Saccharomyces cerevisiae (strain ATCC 204508 / S288c) (Baker's yeast).